Here is a 153-residue protein sequence, read N- to C-terminus: Mitochondrial fission 1 protein (153 aa).

The Cytoplasmic portion of the chain corresponds to 1 to 127 (MFGKSTYPAL…SIHEKVTQEG (127 aa)). The stretch at 76–109 (RECLYYLALGSYKIGDYSNATRYADTLLKNEPEN) is one TPR repeat. A helical transmembrane segment spans residues 128 to 148 (LIGIGIAGGALAVGVGILGAL). Over 149 to 153 (LRKKR) the chain is Mitochondrial intermembrane.

This sequence belongs to the FIS1 family.

Its subcellular location is the mitochondrion outer membrane. Its function is as follows. Has a role in mitochondrial fission. Has a role in outer membrane fission but not matrix separation. This is Mitochondrial fission 1 protein (FIS1) from Debaryomyces hansenii (strain ATCC 36239 / CBS 767 / BCRC 21394 / JCM 1990 / NBRC 0083 / IGC 2968) (Yeast).